A 123-amino-acid polypeptide reads, in one-letter code: Holo-[acyl-carrier-protein] synthase (123 aa).

Mg(2+) contacts are provided by Asp-8 and Glu-55.

It belongs to the P-Pant transferase superfamily. AcpS family. It depends on Mg(2+) as a cofactor.

It is found in the cytoplasm. The enzyme catalyses apo-[ACP] + CoA = holo-[ACP] + adenosine 3',5'-bisphosphate + H(+). In terms of biological role, transfers the 4'-phosphopantetheine moiety from coenzyme A to a Ser of acyl-carrier-protein. The polypeptide is Holo-[acyl-carrier-protein] synthase (Caldicellulosiruptor saccharolyticus (strain ATCC 43494 / DSM 8903 / Tp8T 6331)).